Here is an 819-residue protein sequence, read N- to C-terminus: Ion-translocating oxidoreductase complex subunit C (819 aa).

2 consecutive 4Fe-4S ferredoxin-type domains span residues 368-398 (EYAE…QQLY) and 408-437 (KSEE…IQYF). The [4Fe-4S] cluster site is built by Cys-378, Cys-381, Cys-384, Cys-388, Cys-417, Cys-420, Cys-423, and Cys-427. Basic and acidic residues-rich tracts occupy residues 465 to 477 (QARM…ERKA) and 485 to 513 (ARRE…KANE). Disordered stretches follow at residues 465 to 568 (QARM…NAKK), 580 to 677 (AKKL…TALD), and 692 to 793 (AKKL…PKKA). Composition is skewed to polar residues over residues 554-565 (VENQEQQTQPTN) and 587-601 (NSTS…TAEN). The segment covering 602–614 (QVEKTKSAVEKTQ) has biased composition (basic and acidic residues). Polar residues predominate over residues 641-656 (QTNSTSEAISNSQTAE). Residues 658-671 (EVEKTKSAVEKTEE) show a composition bias toward basic and acidic residues. 2 stretches are compositionally biased toward polar residues: residues 699–712 (NSAS…QTAE) and 755–768 (NSTS…QTAE). Over residues 770–782 (EVEKTKSAVEKTQ) the composition is skewed to basic and acidic residues.

This sequence belongs to the 4Fe4S bacterial-type ferredoxin family. RnfC subfamily. As to quaternary structure, the complex is composed of six subunits: RnfA, RnfB, RnfC, RnfD, RnfE and RnfG. It depends on [4Fe-4S] cluster as a cofactor.

The protein resides in the cell inner membrane. Functionally, part of a membrane-bound complex that couples electron transfer with translocation of ions across the membrane. The sequence is that of Ion-translocating oxidoreductase complex subunit C from Haemophilus influenzae (strain ATCC 51907 / DSM 11121 / KW20 / Rd).